The primary structure comprises 81 residues: Putative defensin-like protein 52 (81 aa).

An N-terminal signal peptide occupies residues 1-20 (MTFFLVIILAISSSNYNVLA). 2 disulfides stabilise this stretch: Cys-31/Cys-55 and Cys-41/Cys-64.

It belongs to the DEFL family.

It localises to the secreted. The chain is Putative defensin-like protein 52 from Arabidopsis thaliana (Mouse-ear cress).